Reading from the N-terminus, the 254-residue chain is 3-deoxy-manno-octulosonate cytidylyltransferase (254 aa).

The protein belongs to the KdsB family.

Its subcellular location is the cytoplasm. It carries out the reaction 3-deoxy-alpha-D-manno-oct-2-ulosonate + CTP = CMP-3-deoxy-beta-D-manno-octulosonate + diphosphate. The protein operates within nucleotide-sugar biosynthesis; CMP-3-deoxy-D-manno-octulosonate biosynthesis; CMP-3-deoxy-D-manno-octulosonate from 3-deoxy-D-manno-octulosonate and CTP: step 1/1. Its pathway is bacterial outer membrane biogenesis; lipopolysaccharide biosynthesis. Activates KDO (a required 8-carbon sugar) for incorporation into bacterial lipopolysaccharide in Gram-negative bacteria. In Porphyromonas gingivalis (strain ATCC BAA-308 / W83), this protein is 3-deoxy-manno-octulosonate cytidylyltransferase.